The sequence spans 176 residues: MDLSESLHDFILVFLGSGLILGSLGVVFFTNTIFSAFSLGLVLVCVSLFYILSNSHFVAASQLLIYVGAINVLIIFAVMFMNGSEYDQNFRVWTVGDGITLMVCTSIFISQINTILDTSWHGIIWTTRPNQILEQDLISTSQQIGIHLSTDFFLPFELISIILLVALIGAIFVARQ.

5 consecutive transmembrane segments (helical) span residues 10-30 (FILV…VFFT), 32-52 (TIFS…FYIL), 63-83 (LLIY…FMNG), 92-112 (VWTV…ISQI), and 152-172 (FFLP…GAIF).

The protein belongs to the complex I subunit 6 family. In terms of assembly, NDH is composed of at least 16 different subunits, 5 of which are encoded in the nucleus.

Its subcellular location is the plastid. It is found in the chloroplast thylakoid membrane. The catalysed reaction is a plastoquinone + NADH + (n+1) H(+)(in) = a plastoquinol + NAD(+) + n H(+)(out). The enzyme catalyses a plastoquinone + NADPH + (n+1) H(+)(in) = a plastoquinol + NADP(+) + n H(+)(out). Functionally, NDH shuttles electrons from NAD(P)H:plastoquinone, via FMN and iron-sulfur (Fe-S) centers, to quinones in the photosynthetic chain and possibly in a chloroplast respiratory chain. The immediate electron acceptor for the enzyme in this species is believed to be plastoquinone. Couples the redox reaction to proton translocation, and thus conserves the redox energy in a proton gradient. The polypeptide is NAD(P)H-quinone oxidoreductase subunit 6, chloroplastic (ndhG) (Phaseolus vulgaris (Kidney bean)).